A 511-amino-acid chain; its full sequence is MDKILILDFGGQYTQLIARRIRDLNVYSEIVDYDISIEEIIKKNPKGIILSGGYDSVYGDRSIKPNKGIWDLNIPILGICYGFQVMMQENGGQVENDKDSEEYGSTDIRLTTNELFENIELDNNCWMSHSDSVIFLPKGFKVIASTNKCLVASACNREKKFYGVQFHPEVTQTTFGNQLLQNFVYSICDVAGDWEPKNIKLEKIEEIKSIVKDDYVLCAISGGVDSLVAAVLTAQAIGDKLYCVFVDHGLLRKNESQEVCALLKKLIGKNIFLVDQKQLFLSKLKGVVDPEQKRKIIGKTFIEVFEKVANKINVPFKYLLQGTIYPDIVESGSKFSKTIKSHHNVGGLPERLQFELLEPLKYLFKDEVRKLGLSLDIPYQNVYRQPFPGPGLAVRVLGEITEDKLEIVREADFLFRSYIDQLYKNSEHKPWQYFTVLTNSKSVGVVGDNRSYGYTLALRAVDSMDAMSAKWYKIPLEHLEKISSIICNKVKNISRVVYDITNKPPGTIEWE.

A Glutamine amidotransferase type-1 domain is found at 3-193; it reads KILILDFGGQ…VYSICDVAGD (191 aa). The active-site Nucleophile is the Cys80. Active-site residues include His167 and Glu169. The GMPS ATP-PPase domain occupies 194–384; it reads WEPKNIKLEK…LDIPYQNVYR (191 aa). 221–227 contacts ATP; that stretch reads SGGVDSL.

In terms of assembly, homodimer.

It carries out the reaction XMP + L-glutamine + ATP + H2O = GMP + L-glutamate + AMP + diphosphate + 2 H(+). Its pathway is purine metabolism; GMP biosynthesis; GMP from XMP (L-Gln route): step 1/1. In terms of biological role, catalyzes the synthesis of GMP from XMP. The protein is GMP synthase [glutamine-hydrolyzing] of Malacoplasma penetrans (strain HF-2) (Mycoplasma penetrans).